The primary structure comprises 37 residues: Conotoxin r11e (37 aa).

Disulfide bonds link C2/C16, C9/C21, C15/C26, and C20/C33. 2 positions are modified to 4-carboxyglutamate: E13 and E14. W34 is modified (6'-bromotryptophan).

Expressed by the venom duct.

It localises to the secreted. Functionally, causes hyperactivity, circular motion, convulsion, urination and death, when injected into 13- to 15-day-old mice. Causes gasping, backward swimming or swimming in a vertical direction and death, when intraperitoneally injected into goldfish. This is Conotoxin r11e from Conus radiatus (Rayed cone).